The primary structure comprises 264 residues: NAD-capped RNA hydrolase NudC (264 aa).

Arg-70 serves as a coordination point for substrate. Residues Cys-99 and Cys-102 each contribute to the Zn(2+) site. Residue Glu-112 participates in substrate binding. Cys-117 and Cys-122 together coordinate Zn(2+). Residue Tyr-127 participates in substrate binding. Residues 128 to 257 (PVICPSIIVA…TIALKLINAT (130 aa)) enclose the Nudix hydrolase domain. The a divalent metal cation site is built by Ala-166, Glu-182, and Glu-186. The short motif at 167 to 188 (GFVEIGESFEQTVEREVFEETG) is the Nudix box element. 200-207 (QPWAFPNS) contacts substrate. Glu-227 is an a divalent metal cation binding site. Ala-250 lines the substrate pocket.

This sequence belongs to the Nudix hydrolase family. NudC subfamily. Homodimer. Mg(2+) serves as cofactor. The cofactor is Mn(2+). It depends on Zn(2+) as a cofactor.

It carries out the reaction a 5'-end NAD(+)-phospho-ribonucleoside in mRNA + H2O = a 5'-end phospho-adenosine-phospho-ribonucleoside in mRNA + beta-nicotinamide D-ribonucleotide + 2 H(+). The enzyme catalyses NAD(+) + H2O = beta-nicotinamide D-ribonucleotide + AMP + 2 H(+). It catalyses the reaction NADH + H2O = reduced beta-nicotinamide D-ribonucleotide + AMP + 2 H(+). MRNA decapping enzyme that specifically removes the nicotinamide adenine dinucleotide (NAD) cap from a subset of mRNAs by hydrolyzing the diphosphate linkage to produce nicotinamide mononucleotide (NMN) and 5' monophosphate mRNA. The NAD-cap is present at the 5'-end of some mRNAs and stabilizes RNA against 5'-processing. Has preference for mRNAs with a 5'-end purine. Catalyzes the hydrolysis of a broad range of dinucleotide pyrophosphates. In Actinobacillus succinogenes (strain ATCC 55618 / DSM 22257 / CCUG 43843 / 130Z), this protein is NAD-capped RNA hydrolase NudC.